We begin with the raw amino-acid sequence, 79 residues long: Defensin 2 (79 aa).

The N-terminal stretch at 1-32 is a signal peptide; the sequence is VQKRTIIMEKKMAGFCIFFLILFLAQEYGVEG. 3 disulfide bridges follow: C35–C79, C46–C67, and C52–C73.

It belongs to the DEFL family. As to quaternary structure, may form dimers. Not glycosylated. In terms of processing, has 4 disulfide bonds.

In terms of biological role, probably has antifungal activity. The polypeptide is Defensin 2 (Arachis hypogaea (Peanut)).